A 509-amino-acid chain; its full sequence is Maturase K (509 aa).

Belongs to the intron maturase 2 family. MatK subfamily.

Its subcellular location is the plastid. It is found in the chloroplast. In terms of biological role, usually encoded in the trnK tRNA gene intron. Probably assists in splicing its own and other chloroplast group II introns. This is Maturase K from Nicotiana glutinosa (Tobacco).